A 281-amino-acid chain; its full sequence is Ribosomal protein L11 methyltransferase (281 aa).

S-adenosyl-L-methionine contacts are provided by Thr133, Gly154, Asp175, and Asn216.

It belongs to the methyltransferase superfamily. PrmA family.

It is found in the cytoplasm. It carries out the reaction L-lysyl-[protein] + 3 S-adenosyl-L-methionine = N(6),N(6),N(6)-trimethyl-L-lysyl-[protein] + 3 S-adenosyl-L-homocysteine + 3 H(+). Functionally, methylates ribosomal protein L11. The sequence is that of Ribosomal protein L11 methyltransferase from Campylobacter jejuni (strain RM1221).